Consider the following 1042-residue polypeptide: Kinesin-like protein KIN-5A (1042 aa).

The segment covering 1-14 has biased composition (low complexity); that stretch reads MDSNNSKKGSSVKS. Residues 1–45 form a disordered region; sequence MDSNNSKKGSSVKSPCQTPRSTEKSNRDFRVDSNSNSNPVSKNEK. Basic and acidic residues predominate over residues 21–31; the sequence is STEKSNRDFRV. A compositionally biased stretch (polar residues) spans 32–41; it reads DSNSNSNPVS. The Kinesin motor domain maps to 50-392; sequence NIQVIVRCRP…LDYAHRAKHI (343 aa). 136–143 serves as a coordination point for ATP; sequence GQTGTGKT. Residues 480–517 adopt a coiled-coil conformation; sequence TAGLREKLDKTEKKLYETEQALLDLEEKHRQAVATIKE. The disordered stretch occupies residues 1021–1042; the sequence is KQMQNGEAKHVSNGRPPLTAIN.

Belongs to the TRAFAC class myosin-kinesin ATPase superfamily. Kinesin family. KIN-5/BimC subfamily.

The protein localises to the cytoplasm. Its subcellular location is the cytoskeleton. It is found in the spindle. Its function is as follows. Responsible for microtubule translocation. May be important for the organization of phragmoplast-specific arrays of microtubules. Plays an essential role in stabilizing the mitotic spindle. Required during mitotic cytokinesis. The protein is Kinesin-like protein KIN-5A of Arabidopsis thaliana (Mouse-ear cress).